A 349-amino-acid polypeptide reads, in one-letter code: Fe(3+) ions import ATP-binding protein FbpC (349 aa).

The ABC transporter domain maps to L4–L236. G36–T43 is a binding site for ATP.

The protein belongs to the ABC transporter superfamily. Fe(3+) ion importer (TC 3.A.1.10) family. As to quaternary structure, the complex is composed of two ATP-binding proteins (FbpC), two transmembrane proteins (FbpB) and a solute-binding protein (FbpA).

It localises to the cell inner membrane. It carries out the reaction Fe(3+)(out) + ATP + H2O = Fe(3+)(in) + ADP + phosphate + H(+). Its function is as follows. Part of the ABC transporter complex FbpABC involved in Fe(3+) ions import. Responsible for energy coupling to the transport system. In Yersinia pestis bv. Antiqua (strain Antiqua), this protein is Fe(3+) ions import ATP-binding protein FbpC.